The sequence spans 179 residues: SCAN domain-containing protein 1 (179 aa).

Residues 1 to 108 are disordered; sequence MAATEPILAA…GSRLGPETFR (108 aa). Over residues 60 to 80 the composition is skewed to low complexity; sequence AIPTPQAAASAAPELPLGPAP. Residues 108 to 166 form the SCAN box domain; that stretch reads RQRFRQFRYQDAAGPREAFRQLRELSRQWLRPDIRTKEQIVEMLVQEQLLAILPEAARA.

As to quaternary structure, interacts with ZNF202.

The protein resides in the nucleus. Functionally, may regulate transcriptional activity. The sequence is that of SCAN domain-containing protein 1 (SCAND1) from Pongo pygmaeus (Bornean orangutan).